A 380-amino-acid chain; its full sequence is Cytochrome b (380 aa).

4 consecutive transmembrane segments (helical) span residues 34 to 54 (FGSL…LLAM), 78 to 99 (WLIR…FLHI), 114 to 134 (WNTG…GYVL), and 179 to 199 (FFAL…IHLT). Heme b contacts are provided by His-84 and His-98. 2 residues coordinate heme b: His-183 and His-197. His-202 is an a ubiquinone binding site. 4 consecutive transmembrane segments (helical) span residues 227–247 (LKDI…ALFS), 289–309 (LGGV…PFLH), 321–341 (LSQI…WIGS), and 348–368 (FIII…ILFP).

This sequence belongs to the cytochrome b family. In terms of assembly, the cytochrome bc1 complex contains 11 subunits: 3 respiratory subunits (MT-CYB, CYC1 and UQCRFS1), 2 core proteins (UQCRC1 and UQCRC2) and 6 low-molecular weight proteins (UQCRH/QCR6, UQCRB/QCR7, UQCRQ/QCR8, UQCR10/QCR9, UQCR11/QCR10 and a cleavage product of UQCRFS1). This cytochrome bc1 complex then forms a dimer. Heme b is required as a cofactor.

It localises to the mitochondrion inner membrane. Its function is as follows. Component of the ubiquinol-cytochrome c reductase complex (complex III or cytochrome b-c1 complex) that is part of the mitochondrial respiratory chain. The b-c1 complex mediates electron transfer from ubiquinol to cytochrome c. Contributes to the generation of a proton gradient across the mitochondrial membrane that is then used for ATP synthesis. This is Cytochrome b (MT-CYB) from Pavo muticus (Green peafowl).